Consider the following 131-residue polypeptide: Fumarate reductase subunit C (131 aa).

2 helical membrane passes run 60–80 and 110–130; these read FVGF…LAAA and IKGL…VALF.

It belongs to the FrdC family. In terms of assembly, part of an enzyme complex containing four subunits: a flavoprotein (FrdA), an iron-sulfur protein (FrdB), and two hydrophobic anchor proteins (FrdC and FrdD).

The protein localises to the cell inner membrane. In terms of biological role, two distinct, membrane-bound, FAD-containing enzymes are responsible for the catalysis of fumarate and succinate interconversion; fumarate reductase is used in anaerobic growth, and succinate dehydrogenase is used in aerobic growth. Anchors the catalytic components of the fumarate reductase complex to the cell inner membrane, binds quinones. This Enterobacter sp. (strain 638) protein is Fumarate reductase subunit C.